The chain runs to 217 residues: GTP cyclohydrolase 1 (217 aa).

Residues cysteine 109, histidine 112, and cysteine 180 each contribute to the Zn(2+) site.

Belongs to the GTP cyclohydrolase I family. As to quaternary structure, toroid-shaped homodecamer, composed of two pentamers of five dimers.

It carries out the reaction GTP + H2O = 7,8-dihydroneopterin 3'-triphosphate + formate + H(+). The protein operates within cofactor biosynthesis; 7,8-dihydroneopterin triphosphate biosynthesis; 7,8-dihydroneopterin triphosphate from GTP: step 1/1. This is GTP cyclohydrolase 1 from Aliivibrio fischeri (strain ATCC 700601 / ES114) (Vibrio fischeri).